A 327-amino-acid polypeptide reads, in one-letter code: 7,8-didemethyl-8-hydroxy-5-deazariboflavin synthase (327 aa).

The region spanning 6-244 (ITFSRNVFLP…EEVAVQVAPN (239 aa)) is the Radical SAM core domain. Positions 20, 24, and 27 each coordinate [4Fe-4S] cluster.

This sequence belongs to the radical SAM superfamily. CofG family. Consists of two subunits, CofG and CofH. [4Fe-4S] cluster is required as a cofactor.

The catalysed reaction is 5-amino-5-(4-hydroxybenzyl)-6-(D-ribitylimino)-5,6-dihydrouracil + S-adenosyl-L-methionine = 7,8-didemethyl-8-hydroxy-5-deazariboflavin + 5'-deoxyadenosine + L-methionine + NH4(+) + H(+). It functions in the pathway cofactor biosynthesis; coenzyme F0 biosynthesis. In terms of biological role, catalyzes the radical-mediated synthesis of 7,8-didemethyl-8-hydroxy-5-deazariboflavin from 5-amino-5-(4-hydroxybenzyl)-6-(D-ribitylimino)-5,6-dihydrouracil. The polypeptide is 7,8-didemethyl-8-hydroxy-5-deazariboflavin synthase (Methanosphaerula palustris (strain ATCC BAA-1556 / DSM 19958 / E1-9c)).